The primary structure comprises 501 residues: Melianol synthase CYP71BQ5 (501 aa).

A helical transmembrane segment spans residues Met1 to His21. A heme-binding site is contributed by Cys439.

The protein belongs to the cytochrome P450 family. Heme is required as a cofactor. Mainly expressed in petioles and roots, and, to a lower extent, in leaves.

The protein localises to the membrane. The enzyme catalyses dihydroniloticin + 2 reduced [NADPH--hemoprotein reductase] + 2 O2 = melianol + 2 oxidized [NADPH--hemoprotein reductase] + 3 H2O + 2 H(+). The protein operates within secondary metabolite biosynthesis; terpenoid biosynthesis. Its function is as follows. Monooxygenase involved in the biosynthesis of limonoids triterpene natural products such as azadirachtin, an antifeedant widely used as bioinsecticide, and possessing many medicinal applications including anti-tumoral, anti-malarial, anti-rheumatic, antibacterial, anti-inflammatory, anti-pyretic and diuretic effects. Catalyzes the conversion of dihydroniloticin to the protolimonoid melianol. In Melia azedarach (Chinaberry tree), this protein is Melianol synthase CYP71BQ5.